Consider the following 123-residue polypeptide: Omega-oxotoxin-Ot1a (123 aa).

A signal peptide spans 1–16 (MKIVLVFVCTLYLAQA). A propeptide spanning residues 17 to 54 (TYLSEQDVNEVSEFLEALDQANEAASEMVEAAETEEAR) is cleaved from the precursor. The region spanning 55 to 122 (DWECLPLHSS…GKINTCDKYK (68 aa)) is the Oxytoxin-type inhibitor cystine knot (ICK) domain. Intrachain disulfides connect Cys-58–Cys-72, Cys-65–Cys-77, Cys-69–Cys-118, Cys-71–Cys-106, and Cys-79–Cys-104.

The protein belongs to the spiderine family. Spiderine subfamily. In terms of processing, mass spectrometry data suggest a carboxylated free C-terminal residue. In terms of tissue distribution, expressed by the venom gland.

The protein localises to the secreted. In terms of biological role, weak blocker of vertebrate P/Q-, N- and L-type voltage-gated calcium channels (Cav1 and Cav2). Is both paralytic and lethal when injected into lepidopteran larvae. Is not toxic to mice. The chain is Omega-oxotoxin-Ot1a from Oxyopes takobius (Lynx spider).